We begin with the raw amino-acid sequence, 1155 residues long: DNA-directed RNA polymerase subunit beta (1155 aa).

The protein belongs to the RNA polymerase beta chain family. As to quaternary structure, the RNAP catalytic core consists of 2 alpha, 1 beta, 1 beta' and 1 omega subunit. When a sigma factor is associated with the core the holoenzyme is formed, which can initiate transcription.

It carries out the reaction RNA(n) + a ribonucleoside 5'-triphosphate = RNA(n+1) + diphosphate. Its function is as follows. DNA-dependent RNA polymerase catalyzes the transcription of DNA into RNA using the four ribonucleoside triphosphates as substrates. The sequence is that of DNA-directed RNA polymerase subunit beta from Borrelia hermsii (strain HS1 / DAH).